The chain runs to 208 residues: Thymidylate kinase (208 aa).

13-20 (GLEGAGKS) provides a ligand contact to ATP.

Belongs to the thymidylate kinase family.

It catalyses the reaction dTMP + ATP = dTDP + ADP. In terms of biological role, phosphorylation of dTMP to form dTDP in both de novo and salvage pathways of dTTP synthesis. This chain is Thymidylate kinase, found in Shewanella amazonensis (strain ATCC BAA-1098 / SB2B).